The sequence spans 509 residues: Photosystem II CP47 reaction center protein (509 aa).

6 helical membrane passes run 21 to 36 (SVHL…WAGS), 101 to 115 (IVLS…IWHW), 140 to 156 (GIHL…FGAF), 203 to 218 (IAAG…FHLN), 237 to 252 (VLSS…SFVV), and 457 to 472 (NFAL…HGSR).

This sequence belongs to the PsbB/PsbC family. PsbB subfamily. In terms of assembly, PSII is composed of 1 copy each of membrane proteins PsbA, PsbB, PsbC, PsbD, PsbE, PsbF, PsbH, PsbI, PsbJ, PsbK, PsbL, PsbM, PsbT, PsbY, PsbZ, Psb30/Ycf12, at least 3 peripheral proteins of the oxygen-evolving complex and a large number of cofactors. It forms dimeric complexes. Requires Binds multiple chlorophylls. PSII binds additional chlorophylls, carotenoids and specific lipids. as cofactor.

The protein resides in the plastid. It is found in the chloroplast thylakoid membrane. Its function is as follows. One of the components of the core complex of photosystem II (PSII). It binds chlorophyll and helps catalyze the primary light-induced photochemical processes of PSII. PSII is a light-driven water:plastoquinone oxidoreductase, using light energy to abstract electrons from H(2)O, generating O(2) and a proton gradient subsequently used for ATP formation. This chain is Photosystem II CP47 reaction center protein, found in Cyanidium caldarium (Red alga).